Consider the following 479-residue polypeptide: Cardiolipin synthase A (479 aa).

Transmembrane regions (helical) follow at residues 8–28 and 38–58; these read IFGY…IHAV and IAWA…YLVF. PLD phosphodiesterase domains lie at 218 to 245 and 392 to 419; these read VNFR…GDEY and QPGF…DNRS. Residues His223, Lys225, Asp230, His397, Lys399, and Asp404 contribute to the active site.

Belongs to the phospholipase D family. Cardiolipin synthase subfamily. ClsA sub-subfamily.

It is found in the cell inner membrane. It catalyses the reaction 2 a 1,2-diacyl-sn-glycero-3-phospho-(1'-sn-glycerol) = a cardiolipin + glycerol. In terms of biological role, catalyzes the reversible phosphatidyl group transfer from one phosphatidylglycerol molecule to another to form cardiolipin (CL) (diphosphatidylglycerol) and glycerol. The polypeptide is Cardiolipin synthase A (Pseudomonas fluorescens (strain ATCC BAA-477 / NRRL B-23932 / Pf-5)).